Here is a 208-residue protein sequence, read N- to C-terminus: Orotidine 5'-phosphate decarboxylase (208 aa).

Residues Asp-7, Lys-29, 57–66, Ser-109, 162–172, Gly-185, and Arg-186 contribute to the substrate site; these read DLKLADIPNT and PGIGAQGGKAK. Lys-59 acts as the Proton donor in catalysis.

Belongs to the OMP decarboxylase family. Type 1 subfamily. In terms of assembly, homodimer.

It carries out the reaction orotidine 5'-phosphate + H(+) = UMP + CO2. Its pathway is pyrimidine metabolism; UMP biosynthesis via de novo pathway; UMP from orotate: step 2/2. Catalyzes the decarboxylation of orotidine 5'-monophosphate (OMP) to uridine 5'-monophosphate (UMP). This is Orotidine 5'-phosphate decarboxylase (pyrF) from Pyrococcus horikoshii (strain ATCC 700860 / DSM 12428 / JCM 9974 / NBRC 100139 / OT-3).